The primary structure comprises 864 residues: Protein translocase subunit SecA (864 aa).

Residues Gln-87, 105–109 (GEGKT), and Asp-494 contribute to the ATP site. Residues 809–864 (AKATELRHKEQPAELSYSGGDEDGAKTPSRRNAPKVGRNDPCPCGSGKKYKKCCGA) form a disordered region. The span at 810 to 820 (KATELRHKEQP) shows a compositional bias: basic and acidic residues. The Zn(2+) site is built by Cys-850, Cys-852, Cys-861, and Cys-862.

This sequence belongs to the SecA family. In terms of assembly, monomer and homodimer. Part of the essential Sec protein translocation apparatus which comprises SecA, SecYEG and auxiliary proteins SecDF-YajC and YidC. Requires Zn(2+) as cofactor.

It is found in the cell inner membrane. Its subcellular location is the cytoplasm. It carries out the reaction ATP + H2O + cellular proteinSide 1 = ADP + phosphate + cellular proteinSide 2.. Part of the Sec protein translocase complex. Interacts with the SecYEG preprotein conducting channel. Has a central role in coupling the hydrolysis of ATP to the transfer of proteins into and across the cell membrane, serving as an ATP-driven molecular motor driving the stepwise translocation of polypeptide chains across the membrane. This is Protein translocase subunit SecA from Oleidesulfovibrio alaskensis (strain ATCC BAA-1058 / DSM 17464 / G20) (Desulfovibrio alaskensis).